We begin with the raw amino-acid sequence, 166 residues long: HTH-type transcriptional regulator PetP (166 aa).

The region spanning 17–152 is the HTH marR-type domain; that stretch reads DEQLRKGIEA…FRQVLEAMMD (136 aa). The segment at residues 66–89 is a DNA-binding region (H-T-H motif); sequence VTTLISVLGVTKQSLNRVLRTLID.

In terms of biological role, necessary for photosynthetic and respiratory growth. This chain is HTH-type transcriptional regulator PetP (petP), found in Rhodobacter capsulatus (strain ATCC BAA-309 / NBRC 16581 / SB1003).